A 518-amino-acid chain; its full sequence is Bifunctional purine biosynthesis protein PurH (518 aa).

The MGS-like domain occupies 1 to 146 (MSPIALLSVS…KNHQDVLVVT (146 aa)).

This sequence belongs to the PurH family.

The catalysed reaction is (6R)-10-formyltetrahydrofolate + 5-amino-1-(5-phospho-beta-D-ribosyl)imidazole-4-carboxamide = 5-formamido-1-(5-phospho-D-ribosyl)imidazole-4-carboxamide + (6S)-5,6,7,8-tetrahydrofolate. It catalyses the reaction IMP + H2O = 5-formamido-1-(5-phospho-D-ribosyl)imidazole-4-carboxamide. It participates in purine metabolism; IMP biosynthesis via de novo pathway; 5-formamido-1-(5-phospho-D-ribosyl)imidazole-4-carboxamide from 5-amino-1-(5-phospho-D-ribosyl)imidazole-4-carboxamide (10-formyl THF route): step 1/1. Its pathway is purine metabolism; IMP biosynthesis via de novo pathway; IMP from 5-formamido-1-(5-phospho-D-ribosyl)imidazole-4-carboxamide: step 1/1. The protein is Bifunctional purine biosynthesis protein PurH of Prochlorococcus marinus (strain NATL1A).